The primary structure comprises 295 residues: ATP synthase gamma chain (295 aa).

It belongs to the ATPase gamma chain family. As to quaternary structure, F-type ATPases have 2 components, CF(1) - the catalytic core - and CF(0) - the membrane proton channel. CF(1) has five subunits: alpha(3), beta(3), gamma(1), delta(1), epsilon(1). CF(0) has three main subunits: a, b and c.

Its subcellular location is the cell inner membrane. In terms of biological role, produces ATP from ADP in the presence of a proton gradient across the membrane. The gamma chain is believed to be important in regulating ATPase activity and the flow of protons through the CF(0) complex. The polypeptide is ATP synthase gamma chain (Campylobacter concisus (strain 13826)).